The chain runs to 380 residues: Bifunctional enzyme IspD/IspF (380 aa).

The segment at 1-224 is 2-C-methyl-D-erythritol 4-phosphate cytidylyltransferase; it reads MTIPATYAAI…ERILGDAMDI (224 aa). The tract at residues 225–380 is 2-C-methyl-D-erythritol 2,4-cyclodiphosphate synthase; the sequence is RLGNGFDVHA…SIATATLVKG (156 aa). Positions 231 and 233 each coordinate a divalent metal cation. Residues 231-233 and 257-258 each bind 4-CDP-2-C-methyl-D-erythritol 2-phosphate; these read DVH and HS. Position 265 (histidine 265) interacts with a divalent metal cation. Residues 279 to 281, 355 to 358, phenylalanine 362, and arginine 365 each bind 4-CDP-2-C-methyl-D-erythritol 2-phosphate; these read DIG and TTSE.

The protein in the N-terminal section; belongs to the IspD/TarI cytidylyltransferase family. IspD subfamily. This sequence in the C-terminal section; belongs to the IspF family. The cofactor is a divalent metal cation.

The enzyme catalyses 2-C-methyl-D-erythritol 4-phosphate + CTP + H(+) = 4-CDP-2-C-methyl-D-erythritol + diphosphate. It carries out the reaction 4-CDP-2-C-methyl-D-erythritol 2-phosphate = 2-C-methyl-D-erythritol 2,4-cyclic diphosphate + CMP. It participates in isoprenoid biosynthesis; isopentenyl diphosphate biosynthesis via DXP pathway; isopentenyl diphosphate from 1-deoxy-D-xylulose 5-phosphate: step 2/6. The protein operates within isoprenoid biosynthesis; isopentenyl diphosphate biosynthesis via DXP pathway; isopentenyl diphosphate from 1-deoxy-D-xylulose 5-phosphate: step 4/6. Its function is as follows. Bifunctional enzyme that catalyzes the formation of 4-diphosphocytidyl-2-C-methyl-D-erythritol from CTP and 2-C-methyl-D-erythritol 4-phosphate (MEP) (IspD), and catalyzes the conversion of 4-diphosphocytidyl-2-C-methyl-D-erythritol 2-phosphate (CDP-ME2P) to 2-C-methyl-D-erythritol 2,4-cyclodiphosphate (ME-CPP) with a corresponding release of cytidine 5-monophosphate (CMP) (IspF). The sequence is that of Bifunctional enzyme IspD/IspF from Paracoccus denitrificans (strain Pd 1222).